A 778-amino-acid polypeptide reads, in one-letter code: Endonuclease MutS2 (778 aa).

Position 328–335 (328–335 (GPNTGGKT)) interacts with ATP. Residues 702 to 777 (LDLRGKRYEE…GSGATIVTFK (76 aa)) form the Smr domain.

Belongs to the DNA mismatch repair MutS family. MutS2 subfamily. In terms of assembly, homodimer. Binds to stalled ribosomes, contacting rRNA.

Its function is as follows. Endonuclease that is involved in the suppression of homologous recombination and thus may have a key role in the control of bacterial genetic diversity. In terms of biological role, acts as a ribosome collision sensor, splitting the ribosome into its 2 subunits. Detects stalled/collided 70S ribosomes which it binds and splits by an ATP-hydrolysis driven conformational change. Acts upstream of the ribosome quality control system (RQC), a ribosome-associated complex that mediates the extraction of incompletely synthesized nascent chains from stalled ribosomes and their subsequent degradation. Probably generates substrates for RQC. This chain is Endonuclease MutS2, found in Streptococcus pneumoniae (strain P1031).